The sequence spans 249 residues: UPF0524 protein C3orf70 homolog B (249 aa).

The segment at 174 to 230 (GPKMGHCSSPSTSEDSGINALGGHFLESCEEESEEEDELSTDGHSSPGSLWDQDECT) is disordered. Residues 201–213 (SCEEESEEEDELS) show a composition bias toward acidic residues.

It belongs to the UPF0524 family.

Functionally, plays a role in neuronal and neurobehavioral development. Required for normal expression of the postmitotic and mature neuron markers elavl3 and eno2 and neurobehaviors related to circadian rhythm and altered light-dark conditions. The protein is UPF0524 protein C3orf70 homolog B of Danio rerio (Zebrafish).